Reading from the N-terminus, the 87-residue chain is Small ribosomal subunit protein uS15c (87 aa).

Residues 1–20 (MNQNLSIRKRNKLKQDSGSP) form a disordered region.

It belongs to the universal ribosomal protein uS15 family. In terms of assembly, part of the 30S ribosomal subunit.

Its subcellular location is the plastid. The protein resides in the chloroplast. This is Small ribosomal subunit protein uS15c (rps15) from Zygnema circumcarinatum (Green alga).